We begin with the raw amino-acid sequence, 148 residues long: Large ribosomal subunit protein uL15 (148 aa).

The segment at 1-51 (MNLSNLKPAEGSTKTRKRIGRGPGSGLGGTSTRGHKGAKSRSGYKNKIGFE) is disordered. The segment covering 21-31 (RGPGSGLGGTS) has biased composition (gly residues). The segment covering 33-44 (RGHKGAKSRSGY) has biased composition (basic residues).

The protein belongs to the universal ribosomal protein uL15 family. As to quaternary structure, part of the 50S ribosomal subunit.

Functionally, binds to the 23S rRNA. The polypeptide is Large ribosomal subunit protein uL15 (Parabacteroides distasonis (strain ATCC 8503 / DSM 20701 / CIP 104284 / JCM 5825 / NCTC 11152)).